The sequence spans 66 residues: Antitoxin RelB2 (66 aa).

Functionally, antitoxin component of a type II toxin-antitoxin (TA) system. Neutralizes the effect of cognate toxin RelE2, but no other RelE or ParE toxin. This Caulobacter vibrioides (strain ATCC 19089 / CIP 103742 / CB 15) (Caulobacter crescentus) protein is Antitoxin RelB2 (relB2).